Here is a 243-residue protein sequence, read N- to C-terminus: MKKSIFSKKLLVSFGSLVTLAAIPLIAISCGQTTDNLSQSQQPGSGTGSGSGTNTENGSNNGSGSGTTNSSGGTNQSGSASGNGSSNSSVSTPDGQHSNPSNPTTSDPKESNPSNPTTSDPKESNPSNPTTSDGQHSNPSNPTTSDPKESNPSNPTTSDGQHSNPSNPTTSDGQHSNPSNPTTSDGQHSNPSNPTTSDGQHSNPSNPTTSDGQHSNPSNPTTSDGQHSNPSNPTTSDGQNQNK.

Positions 1 to 29 (MKKSIFSKKLLVSFGSLVTLAAIPLIAIS) are cleaved as a signal peptide. C30 carries N-palmitoyl cysteine lipidation. C30 carries the S-diacylglycerol cysteine lipid modification. The segment at 34 to 243 (TDNLSQSQQP…TTSDGQNQNK (210 aa)) is disordered. The segment covering 52–92 (GTNTENGSNNGSGSGTTNSSGGTNQSGSASGNGSSNSSVST) has biased composition (low complexity). Residues 93-243 (PDGQHSNPSN…TTSDGQNQNK (151 aa)) show a composition bias toward polar residues. Repeat copies occupy residues 97 to 109 (HSNP…SDPK), 110 to 122 (ESNP…SDPK), 123 to 135 (ESNP…SDGQ), 136 to 148 (HSNP…SDPK), 149 to 161 (ESNP…SDGQ), 162 to 174 (HSNP…SDGQ), 175 to 187 (HSNP…SDGQ), 188 to 200 (HSNP…SDGQ), 201 to 213 (HSNP…SDGQ), 214 to 226 (HSNP…SDGQ), and 227 to 239 (HSNP…SDGQ). Residues 97–239 (HSNPSNPTTS…PSNPTTSDGQ (143 aa)) are 11 X 13 AA tandem repeats.

It is found in the cell membrane. Responsible for the antigenic diversity for host adaptation. Expression in E.coli of a construct containing vlpD, vlpE, and vlpF yields antigenically distinguishable products corresponding to each gene. The sequence is that of Variant surface antigen E (vlpE) from Mesomycoplasma hyorhinis (Mycoplasma hyorhinis).